The primary structure comprises 201 residues: CASP-like protein 2A1 (201 aa).

The disordered stretch occupies residues 1-27; that stretch reads MEKRDKGSSPMATMMGSRDENEDVENT. At 1-30 the chain is on the cytoplasmic side; that stretch reads MEKRDKGSSPMATMMGSRDENEDVENTTRT. The helical transmembrane segment at 31-51 threads the bilayer; it reads AETMLRLVPMALCVSALVVML. Residues 52–72 lie on the Extracellular side of the membrane; that stretch reads KNTQTNDYGSLSYSDLGAFRY. The chain crosses the membrane as a helical span at residues 73–93; it reads LVHVNGICAGYSLLSAVIVAM. The Cytoplasmic portion of the chain corresponds to 94 to 101; sequence PRASTMPR. A helical transmembrane segment spans residues 102–122; the sequence is AWAFFLLDQVLTYVILAAGTV. Residues 123–152 are Extracellular-facing; it reads STEVLYLASKGDTTITWSEACVSFGGFCHK. Residues 153-173 form a helical membrane-spanning segment; it reads ALISIVITFVVVICYAALSLL. The Cytoplasmic portion of the chain corresponds to 174-201; the sequence is SSYKLFSKYDSPVLTYPGKGIEIATFHG.

This sequence belongs to the Casparian strip membrane proteins (CASP) family. As to quaternary structure, homodimer and heterodimers.

It is found in the cell membrane. This is CASP-like protein 2A1 from Populus trichocarpa (Western balsam poplar).